Reading from the N-terminus, the 145-residue chain is SsrA-binding protein (145 aa).

This sequence belongs to the SmpB family.

It is found in the cytoplasm. Required for rescue of stalled ribosomes mediated by trans-translation. Binds to transfer-messenger RNA (tmRNA), required for stable association of tmRNA with ribosomes. tmRNA and SmpB together mimic tRNA shape, replacing the anticodon stem-loop with SmpB. tmRNA is encoded by the ssrA gene; the 2 termini fold to resemble tRNA(Ala) and it encodes a 'tag peptide', a short internal open reading frame. During trans-translation Ala-aminoacylated tmRNA acts like a tRNA, entering the A-site of stalled ribosomes, displacing the stalled mRNA. The ribosome then switches to translate the ORF on the tmRNA; the nascent peptide is terminated with the 'tag peptide' encoded by the tmRNA and targeted for degradation. The ribosome is freed to recommence translation, which seems to be the essential function of trans-translation. The protein is SsrA-binding protein of Mesomycoplasma hyopneumoniae (strain 232) (Mycoplasma hyopneumoniae).